Reading from the N-terminus, the 39-residue chain is Cytochrome b6-f complex subunit 5 (39 aa).

Residues 5–25 (LLCGIVLGLVPITLLGLFVSA) traverse the membrane as a helical segment.

This sequence belongs to the PetG family. As to quaternary structure, the 4 large subunits of the cytochrome b6-f complex are cytochrome b6, subunit IV (17 kDa polypeptide, PetD), cytochrome f and the Rieske protein, while the 4 small subunits are PetG, PetL, PetM and PetN. The complex functions as a dimer.

It is found in the cellular thylakoid membrane. Functionally, component of the cytochrome b6-f complex, which mediates electron transfer between photosystem II (PSII) and photosystem I (PSI), cyclic electron flow around PSI, and state transitions. PetG is required for either the stability or assembly of the cytochrome b6-f complex. This chain is Cytochrome b6-f complex subunit 5, found in Prochlorococcus marinus (strain MIT 9515).